A 311-amino-acid polypeptide reads, in one-letter code: Transcriptional repressor scratch 2 (311 aa).

Residues 1 to 20 (MPRSFLVKKIKADGFQCSGV) are SNAG domain. Disordered stretches follow at residues 71–90 (PAYP…PQSS) and 120–156 (RRRA…ATAG). The span at 124-146 (GAGGDAAGAGDAGGGGGGGGGGE) shows a compositional bias: gly residues. 4 consecutive C2H2-type zinc fingers follow at residues 161 to 183 (HACA…KQTH), 192 to 214 (RKCP…VLTH), 218 to 240 (HKCG…MRSH), and 246 to 268 (FGCA…MQTH). A C2H2-type 5; atypical zinc finger spans residues 274–297 (YRCRQCDKSFALKSYLHKHCEAAC).

Belongs to the snail C2H2-type zinc-finger protein family.

The protein localises to the nucleus. Its function is as follows. May be involved in transcriptional regulation. The sequence is that of Transcriptional repressor scratch 2 (Scrt2) from Mus musculus (Mouse).